The chain runs to 323 residues: Apolipoprotein E (323 aa).

Residues 1–18 form the signal peptide; that stretch reads MKVLWAALVVTLLAGCWA. Repeat copies occupy residues 86–107, 108–129, 130–151, 152–173, 174–195, 196–217, 218–239, and 240–261. Residues 86–261 form an 8 X 22 AA approximate tandem repeats region; sequence ALMDETMKEV…HLEEMREQIQ (176 aa). Met149 carries the methionine sulfoxide modification. At Ser153 the chain carries Phosphoserine. Residues 164–174 are LDL and other lipoprotein receptors binding; the sequence is HMRKLRKRVLR. Heparin is bound at residue 168 to 171; sequence LRKR. Residues 216 to 296 form a lipid-binding and lipoprotein association region; sequence NAKVGALATQ…SWFEPLLEDM (81 aa). 235–242 is a heparin binding site; sequence GQQLRGQL. The homooligomerization stretch occupies residues 272-323; the sequence is DQIRQKAEAFQARLKSWFEPLLEDMQRQWDGLVEKVQAAVATIPTSKPVEEP. The segment at 284 to 296 is specificity for association with VLDL; that stretch reads RLKSWFEPLLEDM.

This sequence belongs to the apolipoprotein A1/A4/E family. Homotetramer. May interact with ABCA1; functionally associated with ABCA1 in the biogenesis of HDLs. May interact with APP/A4 amyloid-beta peptide; the interaction is extremely stable in vitro but its physiological significance is unclear. May interact with MAPT. May interact with MAP2. In the cerebrospinal fluid, interacts with secreted SORL1. Interacts with PMEL; this allows the loading of PMEL luminal fragment on ILVs to induce fibril nucleation. Post-translationally, APOE exists as multiple glycosylated and sialylated glycoforms within cells and in plasma. The extent of glycosylation and sialylation are tissue and context specific. Glycated in plasma VLDL. In terms of processing, phosphorylated by FAM20C in the extracellular medium.

The protein localises to the secreted. The protein resides in the extracellular space. It localises to the extracellular matrix. Its subcellular location is the extracellular vesicle. It is found in the endosome. The protein localises to the multivesicular body. Its function is as follows. APOE is an apolipoprotein, a protein associating with lipid particles, that mainly functions in lipoprotein-mediated lipid transport between organs via the plasma and interstitial fluids. APOE is a core component of plasma lipoproteins and is involved in their production, conversion and clearance. Apolipoproteins are amphipathic molecules that interact both with lipids of the lipoprotein particle core and the aqueous environment of the plasma. As such, APOE associates with chylomicrons, chylomicron remnants, very low density lipoproteins (VLDL) and intermediate density lipoproteins (IDL) but shows a preferential binding to high-density lipoproteins (HDL). It also binds a wide range of cellular receptors including the LDL receptor/LDLR and the very low-density lipoprotein receptor/VLDLR that mediate the cellular uptake of the APOE-containing lipoprotein particles. Finally, APOE also has a heparin-binding activity and binds heparan-sulfate proteoglycans on the surface of cells, a property that supports the capture and the receptor-mediated uptake of APOE-containing lipoproteins by cells. The protein is Apolipoprotein E (APOE) of Canis lupus familiaris (Dog).